The primary structure comprises 995 residues: Endosome/lysosome-associated apoptosis and autophagy regulator family member 2 (995 aa).

The first 21 residues, 1-21, serve as a signal peptide directing secretion; it reads MGVFCWSGCLVISLQLLLGAA. The Extracellular segment spans residues 22–895; that stretch reads LDNLSTCKEE…ACESIDFWLK (874 aa). N-linked (GlcNAc...) asparagine glycosylation is found at asparagine 24, asparagine 136, asparagine 245, asparagine 372, asparagine 527, asparagine 649, asparagine 683, asparagine 700, and asparagine 758. Residues 639-843 enclose the MRH domain; it reads SECLVTYTNE…LWETAEACPL (205 aa). 2 disulfides stabilise this stretch: cysteine 641–cysteine 687 and cysteine 697–cysteine 725. 2 disulfide bridges follow: cysteine 793-cysteine 829 and cysteine 805-cysteine 841. An N-linked (GlcNAc...) asparagine glycan is attached at asparagine 883. A helical transmembrane segment spans residues 896–916; it reads VGAGVGAFTAVLLIALTCYFW. Topologically, residues 917 to 995 are cytoplasmic; the sequence is KKNQKLEYKY…QLKSSRAQNI (79 aa).

The protein belongs to the ELAPOR family. As to expression, expressed in the animal half of the embryo during gastrulation, becoming restricted to the ventral ectoderm at stage 12.5. At the neurula stage, expressed in the anterior ectoderm surrounding the neural plate, and weakly in the epidermis. Expression is especially high in the presumptive hatching gland and cement gland regions. Surprisingly, by the tailbud stage (stage 22), expression is limited to the hatching gland and is not seen in the cement gland. Conversely, in tadpoles expressed broadly in the head, heart and fin. Expression in the head is seen in the primary mouth and in the brain, eyes, otic vesicles and olfactory pits.

The protein localises to the cell membrane. Functionally, functions as a regulator of the BMP signaling pathway and is involved in epidermal differentiation. The chain is Endosome/lysosome-associated apoptosis and autophagy regulator family member 2 (elapor2) from Xenopus laevis (African clawed frog).